Reading from the N-terminus, the 396-residue chain is Enoyl-[acyl-carrier-protein] reductase [NADH] (396 aa).

NAD(+) is bound by residues 47 to 52 (GASTGF), 73 to 74 (FE), 110 to 111 (DA), and 138 to 139 (LA). Tyrosine 224 is a substrate binding site. The active-site Proton donor is the tyrosine 234. Residues lysine 243 and 272-274 (LVT) contribute to the NAD(+) site.

This sequence belongs to the TER reductase family. Monomer.

The catalysed reaction is a 2,3-saturated acyl-[ACP] + NAD(+) = a (2E)-enoyl-[ACP] + NADH + H(+). Its pathway is lipid metabolism; fatty acid biosynthesis. Its function is as follows. Involved in the final reduction of the elongation cycle of fatty acid synthesis (FAS II). Catalyzes the reduction of a carbon-carbon double bond in an enoyl moiety that is covalently linked to an acyl carrier protein (ACP). The sequence is that of Enoyl-[acyl-carrier-protein] reductase [NADH] from Flavobacterium psychrophilum (strain ATCC 49511 / DSM 21280 / CIP 103535 / JIP02/86).